Consider the following 711-residue polypeptide: Ribosomal RNA large subunit methyltransferase K/L (711 aa).

The 112-residue stretch at Asp-42–Leu-153 folds into the THUMP domain.

It belongs to the methyltransferase superfamily. RlmKL family.

It localises to the cytoplasm. It catalyses the reaction guanosine(2445) in 23S rRNA + S-adenosyl-L-methionine = N(2)-methylguanosine(2445) in 23S rRNA + S-adenosyl-L-homocysteine + H(+). It carries out the reaction guanosine(2069) in 23S rRNA + S-adenosyl-L-methionine = N(2)-methylguanosine(2069) in 23S rRNA + S-adenosyl-L-homocysteine + H(+). In terms of biological role, specifically methylates the guanine in position 2445 (m2G2445) and the guanine in position 2069 (m7G2069) of 23S rRNA. This chain is Ribosomal RNA large subunit methyltransferase K/L, found in Xanthomonas campestris pv. campestris (strain 8004).